Reading from the N-terminus, the 236-residue chain is Small ribosomal subunit protein uS2c (236 aa).

Belongs to the universal ribosomal protein uS2 family.

It is found in the plastid. The protein localises to the chloroplast. This is Small ribosomal subunit protein uS2c (rps2) from Phaseolus vulgaris (Kidney bean).